The primary structure comprises 2871 residues: Fibrillin-1 (2871 aa).

The N-terminal stretch at 1-24 is a signal peptide; sequence MRRGRLLEVALGFTVLLASYTSHR. Residues 25–44 constitute a propeptide that is removed on maturation; the sequence is AEANLEAGNGKETRASRAKR. Over residues 29–39 the composition is skewed to basic and acidic residues; the sequence is LEAGNGKETRA. A disordered region spans residues 29-49; it reads LEAGNGKETRASRAKRRGGGG. A fibrillin unique N-terminal (FUN) domain region spans residues 45–81; it reads RGGGGHDALKGPNVCGSRYNAYCCPGWKTLPGGNQCI. The N-terminal domain stretch occupies residues 45-450; that stretch reads RGGGGHDALK…PPRVLPVNVT (406 aa). Disulfide bonds link Cys59–Cys68, Cys67–Cys80, Cys85–Cys94, Cys89–Cys100, Cys102–Cys111, Cys119–Cys129, Cys123–Cys134, Cys136–Cys145, Cys150–Cys160, Cys154–Cys166, and Cys168–Cys177. EGF-like domains follow at residues 81-112, 115-146, and 147-178; these read IVPI…PSCG, SIQH…THCG, and QPVC…PQCE. The segment at 119 to 329 is interaction with MFAP4; it reads CNIRCMNGGS…YTSPDGTRCI (211 aa). The TB 1 domain occupies 184-236; sequence GPCFTVVSNQMCQGQLSGIVCTKTLCCATVGRAWGHPCEMCPAQPHPCRRGFI. Residues 195 to 221 form a hybrid domain 1 region; that stretch reads CQGQLSGIVCTKTLCCATVGRAWGHPC. The region spanning 246 to 287 is the EGF-like 4; calcium-binding domain; the sequence is DVDECQAIPGLCQGGNCINTVGSFECKCPAGHKFNEVSQKCE. Intrachain disulfides connect Cys250–Cys262, Cys257–Cys271, Cys273–Cys286, Cys292–Cys304, Cys299–Cys313, and Cys315–Cys328. Ser268 carries O-linked (Glc) serine glycosylation. Residues 288–329 form the EGF-like 5; calcium-binding domain; sequence DIDECSTIPGICDGGECTNTVSSYFCKCPPGFYTSPDGTRCI. Positions 334–389 constitute a TB 2 domain; sequence GYCYTALTNGRCSNQLPQSITKMQCCCDVGRCWSPGVTVTPEMCPIRATEDFNKLC. Asn448 is a glycosylation site (N-linked (GlcNAc...) asparagine). The EGF-like 6 domain occupies 449-489; sequence VTDYCQLFRYLCHNGRCIPTPGSYRCECNKGFQLDLRGECI. Intrachain disulfides connect Cys453-Cys465, Cys460-Cys474, Cys476-Cys488, Cys494-Cys504, Cys499-Cys513, Cys515-Cys528, Cys534-Cys546, Cys541-Cys555, Cys557-Cys570, Cys576-Cys587, Cys582-Cys596, Cys598-Cys611, Cys617-Cys628, Cys623-Cys637, and Cys639-Cys652. The O-linked (Glc) serine glycan is linked to Ser471. The 40-residue stretch at 490-529 folds into the EGF-like 7; calcium-binding domain; that stretch reads DVDECEKNPCAGGECINNQGSYTCQCRPGYQSTLTRTECR. Ser510 is a glycosylation site (O-linked (Glc) serine). The region spanning 530-571 is the EGF-like 8; calcium-binding domain; sequence DIDECLQNGRICNNGRCINTDGSFHCVCNAGFHVTRDGKNCE. Residues 572–612 form the EGF-like 9; calcium-binding domain; sequence DMDECSIRNMCLNGMCINEDGSFKCICKPGFQLASDGRYCK. Positions 613–653 constitute an EGF-like 10; calcium-binding domain; that stretch reads DINECETSGICMNGRCVNTDGSYRCECFPGLAVGLDGRVCV. The 53-residue stretch at 659–711 folds into the TB 3 domain; that stretch reads STCYGGYKRGQCVKPLFGAVTKSECCCASTEYAFGEPCQPCPSQNSAEYQALC. The 42-residue stretch at 723–764 folds into the EGF-like 11; calcium-binding domain; the sequence is DINECALDPDICPNGICENLRGTYKCICNSGYEVDSTGKNCV. Cystine bridges form between Cys727/Cys739, Cys734/Cys748, Cys750/Cys763, Cys769/Cys781, Cys776/Cys790, Cys792/Cys805, Cys811/Cys821, Cys816/Cys830, Cys832/Cys845, Cys853/Cys875, Cys862/Cys887, Cys876/Cys890, Cys896/Cys908, Cys914/Cys926, Cys921/Cys935, and Cys937/Cys950. Residues 765–806 form the EGF-like 12; calcium-binding domain; it reads DINECVLNSLLCDNGQCRNTPGSFVCTCPKGFIYKPDLKTCE. The EGF-like 13; calcium-binding domain maps to 807-846; that stretch reads DIDECESSPCINGVCKNSPGSFICECSSESTLDPTKTICI. Residues 851 to 902 enclose the TB 4 domain; that stretch reads GTCWQTIIDGRCEININGATLKSQCCSSLGAAWGSPCTPCQVDPICGKGYSR. Positions 862-887 are hybrid domain 2; sequence CEININGATLKSQCCSSLGAAWGSPC. One can recognise an EGF-like 14; calcium-binding domain in the interval 910–951; that stretch reads DIDECEVFPGVCKNGLCVNSKGSFKCQCPNGMTLDATGRICL. Residues 956 to 1008 form the TB 5 domain; it reads ETCFLRYEDEECTLPVVGRHRMDACCCSVGAAWGTEECEECPPRNTPEYEELC. The 42-residue stretch at 1028–1069 folds into the EGF-like 15; calcium-binding domain; the sequence is DINECKMIPNLCTHGKCRNTIGSFKCRCDSGFALDSEERNCI. 43 disulfides stabilise this stretch: Cys1032/Cys1044, Cys1039/Cys1053, Cys1055/Cys1068, Cys1074/Cys1086, Cys1081/Cys1095, Cys1097/Cys1111, Cys1117/Cys1129, Cys1124/Cys1138, Cys1140/Cys1153, Cys1159/Cys1171, Cys1201/Cys1212, Cys1208/Cys1221, Cys1223/Cys1236, Cys1242/Cys1254, Cys1249/Cys1263, Cys1265/Cys1278, Cys1284/Cys1296, Cys1291/Cys1305, Cys1307/Cys1320, Cys1326/Cys1339, Cys1333/Cys1348, Cys1350/Cys1361, Cys1367/Cys1380, Cys1374/Cys1389, Cys1391/Cys1402, Cys1408/Cys1420, Cys1415/Cys1429, Cys1450/Cys1461, Cys1456/Cys1470, Cys1472/Cys1485, Cys1491/Cys1502, Cys1497/Cys1511, Cys1513/Cys1526, Cys1534/Cys1562, Cys1549/Cys1574, Cys1563/Cys1577, Cys1564/Cys1589, Cys1610/Cys1622, Cys1617/Cys1631, Cys1633/Cys1646, Cys1652/Cys1663, Cys1658/Cys1672, and Cys1674/Cys1687. The 43-residue stretch at 1070–1112 folds into the EGF-like 16; calcium-binding domain; sequence DIDECRISPDLCGRGQCVNTPGDFECKCDEGYESGFMMMKNCM. Residues 1113–1154 form the EGF-like 17; calcium-binding domain; that stretch reads DIDECQRDPLLCRGGVCLNTEGSYRCECPSGHQMSPNISACI. Ser1135 is a glycosylation site (O-linked (Glc) serine). N-linked (GlcNAc...) asparagine glycosylation is present at Asn1149. The EGF-like 18; calcium-binding domain occupies 1155 to 1196; that stretch reads DINECELSAHLCPHGRCVNLIGKYQRARNPGYHSTPDRLFCV. The EGF-like 19; calcium-binding domain occupies 1197–1237; sequence DIDECSIMNGGCETFCTNSEGSYECSCQPGFALMPDQRSCT. Ser1218 carries an O-linked (Glc) serine glycan. Residues 1238 to 1279 enclose the EGF-like 20; calcium-binding domain; sequence DIDECEDNPNICDGGQCTNIPGEYRCLCYDGFMASEDMKTCV. The EGF-like 21; calcium-binding domain occupies 1280–1321; it reads DVNECDLNPNICLSGTCENTKGSFICHCDMGYSGKKGKTGCT. The O-linked (Glc) serine glycan is linked to Ser1302. In terms of domain architecture, EGF-like 22; calcium-binding spans 1322-1362; the sequence is DINECEIGAHNCDRHAVCTNTAGSFNCSCSPGWIGDGIKCT. O-linked (Glc) serine glycosylation occurs at Ser1345. Asn1347 carries N-linked (GlcNAc...) asparagine glycosylation. Residues 1363–1403 enclose the EGF-like 23; calcium-binding domain; it reads DLDECSNGTHMCSQHADCKNTMGSYRCLCKEGYTGDGFTCA. An N-linked (GlcNAc...) asparagine glycan is attached at Asn1369. The O-linked (Glc) serine glycan is linked to Ser1386. The region spanning 1404 to 1445 is the EGF-like 24; calcium-binding domain; that stretch reads DLDECSENVKLCGNVQCLYAPGGYHCEYDMGFVPSADRKSCV. Residues 1446–1486 form the EGF-like 25; calcium-binding domain; it reads DSDECSLPNICVFGTCHNLPGLFRCECEIGYELDRSGGNCT. N-linked (GlcNAc...) asparagine glycosylation occurs at Asn1484. Residues 1487 to 1527 form the EGF-like 26; calcium-binding domain; it reads DVNECLEPPTCISGNCVNTPGSYTCVCPPDFELNPTRVGCV. Ser1508 is a glycosylation site (O-linked (Glc) serine). Positions 1528 to 2731 are C-terminal domain; sequence DTRSGNCYLD…GYPKRGRKRR (1204 aa). A TB 6 domain is found at 1532–1589; that stretch reads GNCYLDVRPRGDNGDTACSNEIGVGVSKASCCCSLGKAWGTPCEQCPPVNTSEYKILC. The Cell attachment site signature appears at 1541–1543; the sequence is RGD. The N-linked (GlcNAc...) asparagine glycan is linked to Asn1581. Residues 1606-1647 enclose the EGF-like 27; calcium-binding domain; sequence DIDECQELPGLCQGGKCINTFGSFQCRCPTGYYLNEDTRVCD. A glycan (O-linked (Glc) serine) is linked at Ser1628. The EGF-like 28; calcium-binding domain maps to 1648–1688; sequence DVNECETPGICGPGTCYNTVGNYTCICPPDYMQVNGGNNCM. Asn1669 carries an N-linked (GlcNAc...) asparagine glycan. Residues 1693–1748 form the TB 7 domain; sequence SLCYRNYYADNQTCDGELLFNMTKKMCCCSYNIGRAWNKPCEQCPIPSTDEFATLC. N-linked (GlcNAc...) asparagine glycosylation is found at Asn1703 and Asn1713. The EGF-like 29; calcium-binding domain occupies 1766–1807; that stretch reads DIDECREIPGVCENGVCINMVGSFRCECPVGFFYNDKLLVCE. 40 cysteine pairs are disulfide-bonded: Cys1770/Cys1782, Cys1777/Cys1791, Cys1793/Cys1806, Cys1812/Cys1824, Cys1818/Cys1833, Cys1835/Cys1847, Cys1853/Cys1865, Cys1860/Cys1874, Cys1876/Cys1889, Cys1895/Cys1905, Cys1900/Cys1914, Cys1916/Cys1928, Cys1934/Cys1947, Cys1942/Cys1956, Cys1958/Cys1971, Cys1977/Cys1989, Cys1984/Cys1998, Cys2000/Cys2011, Cys2017/Cys2029, Cys2024/Cys2038, Cys2040/Cys2053, Cys2061/Cys2083, Cys2070/Cys2096, Cys2084/Cys2099, Cys2085/Cys2111, Cys2131/Cys2142, Cys2137/Cys2151, Cys2153/Cys2164, Cys2170/Cys2181, Cys2176/Cys2190, Cys2192/Cys2204, Cys2210/Cys2221, Cys2217/Cys2230, Cys2232/Cys2245, Cys2251/Cys2265, Cys2258/Cys2274, Cys2276/Cys2289, Cys2295/Cys2307, Cys2302/Cys2316, and Cys2318/Cys2331. The EGF-like 30; calcium-binding domain maps to 1808-1848; sequence DIDECQNGPVCQRNAECINTAGSYRCDCKPGYRFTSTGQCN. O-linked (Glc) serine glycosylation is present at Ser1830. The 42-residue stretch at 1849–1890 folds into the EGF-like 31; calcium-binding domain; the sequence is DRNECQEIPNICSHGQCIDTVGSFYCLCHTGFKTNADQTMCL. The O-linked (Glc) serine glycan is linked to Ser1871. The region spanning 1891-1929 is the EGF-like 32; calcium-binding domain; the sequence is DINECERDACGNGTCRNTIGSFNCRCNHGFILSHNNDCI. A glycan (N-linked (GlcNAc...) asparagine) is linked at Asn1902. The O-linked (Glc) serine glycan is linked to Ser1911. The EGF-like 33; calcium-binding domain occupies 1930-1972; it reads DVDECATGNGNLCRNGQCINTVGSFQCQCNEGYEVAPDGRTCV. Ser1953 carries O-linked (Glc) serine glycosylation. The EGF-like 34; calcium-binding domain occupies 1973–2012; sequence DINECLLEPGKCAPGTCQNLDGSYRCICPPGYSLQNDKCE. The EGF-like 35; calcium-binding domain maps to 2013–2054; the sequence is DIDECVEEPEICALGTCSNTEGSFKCLCPDGFSLSSTGRRCQ. The O-linked (Glc) serine glycan is linked to Ser2035. The TB 8 domain occupies 2059–2111; it reads SYCYAKFEGGKCSSPKSRNHSKQECCCALKGEGWGDPCELCPTEPDEAFRQIC. Asn2077 carries N-linked (GlcNAc...) asparagine glycosylation. An EGF-like 36; calcium-binding domain is found at 2127–2165; it reads DMDECKEPDVCKHGQCINTDGSYRCECPFGYILEGNECV. O-linked (Glc) serine glycosylation occurs at Ser2148. The region spanning 2166-2205 is the EGF-like 37; calcium-binding domain; the sequence is DTDECSVGNPCGNGTCKNVIGGFECTCEEGFEPGPMMTCE. Asn2178 carries N-linked (GlcNAc...) asparagine glycosylation. The EGF-like 38; calcium-binding domain maps to 2206-2246; that stretch reads DINECAQNPLLCAFRCVNTYGSYECKCPTGYVLREDRRMCK. O-linked (Glc) serine glycosylation occurs at Ser2227. The EGF-like 39; calcium-binding domain occupies 2247 to 2290; that stretch reads DEDECEEGKHDCAEKQMECKNLIGMYICICGPGYQRRPDGEGCV. Residues 2291 to 2332 form the EGF-like 40; calcium-binding domain; the sequence is DENECQTKPGICENGRCLNTRGSYTCECNDGFTASPTQDECL. Ser2313 carries an O-linked (Glc) serine glycan. Residues 2337–2390 form the TB 9 domain; sequence GYCFTEVLQNMCQIGSSNRNPVTKSECCCDGGRGWGPHCEICPFQGTVAFKKLC. Residues 2402-2443 form the EGF-like 41; calcium-binding domain; sequence DIDECKVIHDVCRNGECINDRGSYHCICKTGYTPDITGTACV. Intrachain disulfides connect Cys2406/Cys2418, Cys2413/Cys2427, Cys2429/Cys2442, Cys2448/Cys2459, Cys2455/Cys2468, Cys2470/Cys2483, Cys2489/Cys2500, Cys2496/Cys2509, Cys2511/Cys2522, Cys2528/Cys2541, Cys2535/Cys2550, Cys2552/Cys2565, Cys2571/Cys2581, Cys2577/Cys2590, Cys2592/Cys2605, Cys2611/Cys2622, Cys2617/Cys2631, Cys2633/Cys2646, Cys2652/Cys2663, Cys2659/Cys2672, and Cys2674/Cys2686. Residues 2444 to 2484 form the EGF-like 42; calcium-binding domain; sequence DLNECNQAPKPCNFICKNTEGSYQCSCPKGYILQEDGRSCK. A glycan (O-linked (Glc) serine) is linked at Ser2465. An EGF-like 43; calcium-binding domain is found at 2485–2523; that stretch reads DLDECATKQHNCQFLCVNTIGSFACKCPPGFTQHHTACI. The EGF-like 44; calcium-binding domain maps to 2524 to 2566; it reads DNNECTSDINLCGAKGICQNTPGSFTCECQRGFSLDQSGASCE. Ser2547 carries O-linked (Glc) serine glycosylation. Residues 2567–2606 enclose the EGF-like 45; calcium-binding domain; that stretch reads DVDECEGNHRCQHGCQNIIGGYRCSCPQGYLQHYQWNQCV. The 41-residue stretch at 2607–2647 folds into the EGF-like 46; calcium-binding domain; the sequence is DENECLSAHICGGASCHNTLGSYKCMCPAGFQYEQFSGGCQ. The O-linked (Glc) serine glycan is linked to Ser2628. The EGF-like 47; calcium-binding domain occupies 2648–2687; sequence DINECGSSQAPCSYGCSNTEGGYLCGCPPGYFRIGQGHCV. A phosphoserine mark is found at Ser2702 and Ser2709. 3 N-linked (GlcNAc...) asparagine glycosylation sites follow: Asn2734, Asn2750, and Asn2767.

The protein belongs to the fibrillin family. Interacts with COL16A1. Interacts with integrin alpha-V/beta-3. Interacts with ADAMTS10; this interaction promotes microfibril assembly. Interacts with THSD4; this interaction promotes fibril formation. Interacts (via N-terminal domain) with FBLN2 and FBLN5. Interacts with ELN. Forms a ternary complex with ELN and FBLN2 or FBLN5 and a significant interaction with ELN seen only in the presence of FBLN2 or FBLN5. Interacts (via N-terminal domain) with LTBP2 (via C-terminal domain) in a Ca(+2)-dependent manner. Interacts (via N-terminal domain) with LTBP1 (via C-terminal domain). Interacts with integrins ITGA5:ITGB1, ITGAV:ITGB3 and ITGAV:ITGB6. Interacts (via N-terminal domain) with BMP2, BMP4, BMP7, BMP10 and GDF5. Interacts (via N-terminal domain) with MFAP2 and MFAP5. Interacts with ADAMTSL5. Interacts with MFAP4. Interacts (via N-terminal domain) with TNFSF11 in a Ca(+2)-dependent manner. Interacts (via N-terminal domain) with EFEMP2; this interaction inhibits EFEMP2 binding to LOX and ELN. In terms of processing, cleavage of N- and C-terminus by furin is required for incorporation into the extracellular matrix and assembly into microfibrils. The C-terminus, which corresponds to the Asprosin chain, was initially thought to constitute a propeptide. Fibrillin-1 and Asprosin chains are still linked together during the secretion from cells, but are subsequently separated by furin, an essential step for incorporation of Fibrillin-1 into the nascent microfibrils. Forms intermolecular disulfide bonds either with other fibrillin-1 molecules or with other components of the microfibrils. Post-translationally, O-glycosylated on serine residues by POGLUT2 and POGLUT3 which is necessary for efficient protein secretion.

The protein localises to the secreted. It localises to the extracellular space. It is found in the extracellular matrix. Functionally, structural component of the 10-12 nm diameter microfibrils of the extracellular matrix, which conveys both structural and regulatory properties to load-bearing connective tissues. Fibrillin-1-containing microfibrils provide long-term force bearing structural support. In tissues such as the lung, blood vessels and skin, microfibrils form the periphery of the elastic fiber, acting as a scaffold for the deposition of elastin. In addition, microfibrils can occur as elastin-independent networks in tissues such as the ciliary zonule, tendon, cornea and glomerulus where they provide tensile strength and have anchoring roles. Fibrillin-1 also plays a key role in tissue homeostasis through specific interactions with growth factors, such as the bone morphogenetic proteins (BMPs), growth and differentiation factors (GDFs) and latent transforming growth factor-beta-binding proteins (LTBPs), cell-surface integrins and other extracellular matrix protein and proteoglycan components. Regulates osteoblast maturation by controlling TGF-beta bioavailability and calibrating TGF-beta and BMP levels, respectively. Negatively regulates osteoclastogenesis by binding and sequestering an osteoclast differentiation and activation factor TNFSF11. This leads to disruption of TNFSF11-induced Ca(2+) signaling and impairment of TNFSF11-mediated nuclear translocation and activation of transcription factor NFATC1 which regulates genes important for osteoclast differentiation and function. Mediates cell adhesion via its binding to cell surface receptors integrins ITGAV:ITGB3 and ITGA5:ITGB1. Binds heparin and this interaction plays an important role in the assembly of microfibrils. Hormone that targets the liver to increase plasma glucose levels. Secreted by white adipose tissue and circulates in the plasma. Acts in response to fasting and promotes blood glucose elevation by binding to the surface of hepatocytes. Promotes hepatocyte glucose release by activating the protein kinase A activity in the liver, resulting in rapid glucose release into the circulation. This is Fibrillin-1 from Sus scrofa (Pig).